The following is a 607-amino-acid chain: DNA mismatch repair protein MutL (607 aa).

The protein belongs to the DNA mismatch repair MutL/HexB family.

Its function is as follows. This protein is involved in the repair of mismatches in DNA. It is required for dam-dependent methyl-directed DNA mismatch repair. May act as a 'molecular matchmaker', a protein that promotes the formation of a stable complex between two or more DNA-binding proteins in an ATP-dependent manner without itself being part of a final effector complex. In Anaeromyxobacter sp. (strain K), this protein is DNA mismatch repair protein MutL.